Here is a 379-residue protein sequence, read N- to C-terminus: Arginine biosynthesis bifunctional protein ArgJ (379 aa).

Substrate contacts are provided by Thr-140, Lys-160, Thr-171, Glu-249, Asn-374, and Thr-379. Thr-171 (nucleophile) is an active-site residue.

This sequence belongs to the ArgJ family. As to quaternary structure, heterotetramer of two alpha and two beta chains.

The protein resides in the cytoplasm. The catalysed reaction is N(2)-acetyl-L-ornithine + L-glutamate = N-acetyl-L-glutamate + L-ornithine. It catalyses the reaction L-glutamate + acetyl-CoA = N-acetyl-L-glutamate + CoA + H(+). The protein operates within amino-acid biosynthesis; L-arginine biosynthesis; L-ornithine and N-acetyl-L-glutamate from L-glutamate and N(2)-acetyl-L-ornithine (cyclic): step 1/1. It participates in amino-acid biosynthesis; L-arginine biosynthesis; N(2)-acetyl-L-ornithine from L-glutamate: step 1/4. Its function is as follows. Catalyzes two activities which are involved in the cyclic version of arginine biosynthesis: the synthesis of N-acetylglutamate from glutamate and acetyl-CoA as the acetyl donor, and of ornithine by transacetylation between N(2)-acetylornithine and glutamate. The polypeptide is Arginine biosynthesis bifunctional protein ArgJ (Archaeoglobus fulgidus (strain ATCC 49558 / DSM 4304 / JCM 9628 / NBRC 100126 / VC-16)).